We begin with the raw amino-acid sequence, 673 residues long: Glycine--tRNA ligase beta subunit (673 aa).

This sequence belongs to the class-II aminoacyl-tRNA synthetase family. In terms of assembly, tetramer of two alpha and two beta subunits.

The protein resides in the cytoplasm. The enzyme catalyses tRNA(Gly) + glycine + ATP = glycyl-tRNA(Gly) + AMP + diphosphate. This Lactococcus lactis subsp. cremoris (strain SK11) protein is Glycine--tRNA ligase beta subunit.